Consider the following 105-residue polypeptide: Large ribosomal subunit protein uL24 (105 aa).

It belongs to the universal ribosomal protein uL24 family. Part of the 50S ribosomal subunit.

Its function is as follows. One of two assembly initiator proteins, it binds directly to the 5'-end of the 23S rRNA, where it nucleates assembly of the 50S subunit. In terms of biological role, one of the proteins that surrounds the polypeptide exit tunnel on the outside of the subunit. The sequence is that of Large ribosomal subunit protein uL24 from Methylobacterium sp. (strain 4-46).